Here is a 318-residue protein sequence, read N- to C-terminus: Ferrochelatase (318 aa).

Fe cation is bound by residues His194 and Glu275.

This sequence belongs to the ferrochelatase family.

The protein localises to the cytoplasm. It catalyses the reaction heme b + 2 H(+) = protoporphyrin IX + Fe(2+). It functions in the pathway porphyrin-containing compound metabolism; protoheme biosynthesis; protoheme from protoporphyrin-IX: step 1/1. Its function is as follows. Catalyzes the ferrous insertion into protoporphyrin IX. The sequence is that of Ferrochelatase from Xanthomonas axonopodis pv. citri (strain 306).